Here is a 285-residue protein sequence, read N- to C-terminus: Shikimate dehydrogenase (NADP(+)) (285 aa).

Residues 20-22 (SIS) and serine 67 contribute to the shikimate site. The active-site Proton acceptor is the lysine 71. Residues asparagine 92 and aspartate 107 each contribute to the shikimate site. Residues 129–133 (GAGGA) and isoleucine 227 each bind NADP(+). Tyrosine 229 contacts shikimate. Position 250 (glycine 250) interacts with NADP(+).

The protein belongs to the shikimate dehydrogenase family. In terms of assembly, homodimer.

The catalysed reaction is shikimate + NADP(+) = 3-dehydroshikimate + NADPH + H(+). The protein operates within metabolic intermediate biosynthesis; chorismate biosynthesis; chorismate from D-erythrose 4-phosphate and phosphoenolpyruvate: step 4/7. Its function is as follows. Involved in the biosynthesis of the chorismate, which leads to the biosynthesis of aromatic amino acids. Catalyzes the reversible NADPH linked reduction of 3-dehydroshikimate (DHSA) to yield shikimate (SA). This Streptococcus thermophilus (strain ATCC BAA-491 / LMD-9) protein is Shikimate dehydrogenase (NADP(+)).